The sequence spans 204 residues: Ubiquitin-conjugating enzyme E2 S (204 aa).

The 147-residue stretch at 14-160 (QIIKQVAREI…AKMFTEIHAK (147 aa)) folds into the UBC core domain. The active-site Glycyl thioester intermediate is C98. Over residues 165-176 (SSNNISEGQQES) the composition is skewed to polar residues. A disordered region spans residues 165–204 (SSNNISEGQQESLPGKKRVAVNEKMCDKKKKDKKRALKRL). The segment covering 191–204 (DKKKKDKKRALKRL) has biased composition (basic residues).

It belongs to the ubiquitin-conjugating enzyme family.

It carries out the reaction S-ubiquitinyl-[E1 ubiquitin-activating enzyme]-L-cysteine + [E2 ubiquitin-conjugating enzyme]-L-cysteine = [E1 ubiquitin-activating enzyme]-L-cysteine + S-ubiquitinyl-[E2 ubiquitin-conjugating enzyme]-L-cysteine.. Its pathway is protein modification; protein ubiquitination. Catalyzes the covalent attachment of ubiquitin to other proteins. Acts as an essential factor of the anaphase promoting complex/cyclosome (APC/C), a cell cycle-regulated ubiquitin ligase that controls progression through mitosis. Acts by specifically elongating polyubiquitin chains initiated by the E2 enzyme UBCH10 on APC/C substrates, enhancing the degradation of APC/C substrates by the proteasome and promoting mitotic exit. In Nematostella vectensis (Starlet sea anemone), this protein is Ubiquitin-conjugating enzyme E2 S.